The chain runs to 886 residues: Coatomer subunit gamma (886 aa).

HEAT repeat units lie at residues 66 to 103, 288 to 325, 327 to 359, 360 to 397, and 472 to 509; these read VEATEVFFSVTKLFQSKDTGLRRMVYLIIKELSPSSDE, RELTPAITVLQLFLSSPRPVLRFAAVRTLNKVAMTHPM, VTNCNIDMESLISDQNRSIATLAITTLLKTGNE, SSVERLMKQITNFMSDIADEFKIVVVDAIRSLCVKFPL, and SDPSKYIRYIYNRVHLENATVRAAAVSTLAKFGFMVES. Residues 592–613 are disordered; that stretch reads SQPLAEKKAQGKKPTGLGAPPA.

Belongs to the COPG family. Oligomeric complex that consists of at least the alpha, beta, beta', gamma, delta, epsilon and zeta subunits.

It is found in the cytoplasm. Its subcellular location is the golgi apparatus membrane. It localises to the cytoplasmic vesicle. The protein localises to the COPI-coated vesicle membrane. In terms of biological role, the coatomer is a cytosolic protein complex that binds to dilysine motifs and reversibly associates with Golgi non-clathrin-coated vesicles, which further mediate biosynthetic protein transport from the ER, via the Golgi up to the trans Golgi network. Coatomer complex is required for budding from Golgi membranes, and is essential for the retrograde Golgi-to-ER transport of dilysine-tagged proteins. This is Coatomer subunit gamma from Arabidopsis thaliana (Mouse-ear cress).